The following is a 33-amino-acid chain: Protamine-1B (33 aa).

The interval 1 to 33 is disordered; that stretch reads PRRRRRRSSSRPIRRRRPRRVSRRRRRGGRRRR.

As to expression, testis.

It is found in the nucleus. The protein localises to the chromosome. Protamines substitute for histones in the chromatin of sperm during the haploid phase of spermatogenesis. They compact sperm DNA into a highly condensed, stable and inactive complex. The chain is Protamine-1B from Oncorhynchus mykiss (Rainbow trout).